Here is a 149-residue protein sequence, read N- to C-terminus: Calmodulin (149 aa).

Ala-2 bears the N-acetylalanine mark. EF-hand domains follow at residues 8-43 (EQIA…LGQN), 44-79 (PTEA…KMKD), 81-116 (DSEE…LGEK), and 117-149 (LTDE…MTAK). The Ca(2+) site is built by Asp-21, Asp-23, Asp-25, Thr-27, Glu-32, Asp-57, Asp-59, Asn-61, Thr-63, Glu-68, Asp-94, Asp-96, Asn-98, Tyr-100, and Glu-105. N6,N6,N6-trimethyllysine is present on Lys-116. Residues Asp-130, Asp-132, Asp-134, Gln-136, and Glu-141 each contribute to the Ca(2+) site.

Belongs to the calmodulin family.

In terms of biological role, calmodulin acts as part of a calcium signal transduction pathway by mediating the control of a large number of enzymes, ion channels, aquaporins and other proteins through calcium-binding. Calcium-binding is required for the activation of calmodulin. Among the enzymes to be stimulated by the calmodulin-calcium complex are a number of protein kinases, such as myosin light-chain kinases and calmodulin-dependent protein kinase type II (CaMK2), and phosphatases. This Oreochromis mossambicus (Mozambique tilapia) protein is Calmodulin (calm).